The following is a 51-amino-acid chain: Large ribosomal subunit protein eL39 (51 aa).

Belongs to the eukaryotic ribosomal protein eL39 family.

The polypeptide is Large ribosomal subunit protein eL39 (Pyrobaculum neutrophilum (strain DSM 2338 / JCM 9278 / NBRC 100436 / V24Sta) (Thermoproteus neutrophilus)).